A 150-amino-acid chain; its full sequence is UPF0506 protein SJCHGC02381 (150 aa).

The N-terminal stretch at 1–18 (MNTCIQLLILCLVTVINS) is a signal peptide. N20, N24, N32, N36, N48, N52, N64, and N110 each carry an N-linked (GlcNAc...) asparagine glycan. The tract at residues 22-49 (TDNSTENTIKNETENATETELPETFENE) is disordered. Residues 36–49 (NATETELPETFENE) show a composition bias toward acidic residues. Intrachain disulfides connect C116–C130, C123–C134, and C129–C139.

It belongs to the UPF0506 family.

The protein localises to the secreted. This chain is UPF0506 protein SJCHGC02381, found in Schistosoma japonicum (Blood fluke).